The chain runs to 148 residues: Mobilization protein MobB (148 aa).

In terms of biological role, this protein is essential to promote the specific transfer of the plasmid in the presence of conjugative plasmids. The protein is Mobilization protein MobB (mobB) of Escherichia coli.